A 260-amino-acid chain; its full sequence is MAEEYKNTVPEQETPKVATEESSAPEIKERGMFDFLKKKEEVKPQETTTLASEFEHKTQISEPESFVAKHEEEEHKPTLLEQLHQKHEEEEENKPSLLDKLHRSNSSSSSSSDEEGEDGEKKKKEKKKKIVEGDHVKTVEEENQGVMDRIKEKFPLGEKPGGDDVPVVTTMPAPHSVEDHKPEEEEKKGFMDKIKEKLPGHSKKPEDSQVVNTTPLVETATPIADIPEEKKGFMDKIKEKLPGYHAKTTGEEEKKEKVSD.

Disordered stretches follow at residues Met1–Lys187, Lys197–Leu216, and Lys240–Asp260. Ala2 carries the N-acetylalanine modification. Over residues Glu26 to Pro44 the composition is skewed to basic and acidic residues. Residue Ser61 is modified to Phosphoserine. Basic and acidic residues-rich tracts occupy residues Val67–His102, Ile130–Glu140, Asp148–Gly162, Ser176–Lys187, and Lys197–Asp207. A run of 2 repeats spans residues Glu184 to Lys204 and Pro227 to Lys247. The 2 X 21 AA repeats, Lys-rich stretch occupies residues Glu184–Lys247.

This sequence belongs to the plant dehydrin family. In terms of tissue distribution, in stems, cauline leaves, roots and flowers. Low levels found in maturing seeds. Absent in dry seeds.

This is Dehydrin ERD10 (ERD10) from Arabidopsis thaliana (Mouse-ear cress).